The primary structure comprises 398 residues: Calcium-binding and coiled-coil domain-containing protein 2 (398 aa).

Residues 133–136 (ILVV) carry the CLIR motif. Positions 137-301 (TTQGEVEEIE…RENSRLLSYM (165 aa)) form a coiled coil. An LIR-like motif is present at residues 203-206 (DYWE). The interval 314–341 (TSDEGGAGQNPGLVYGNPYSGIQESSSP) is disordered. Residues 323-333 (NPGLVYGNPYS) are interaction with LGALS8. The interval 347 to 398 (KKCPICKADDICDHTLEQQQMQALCLNCPICDKIFPATEKQIFEDHVFCHSL) is interaction with MYO6. A UBZ1-type zinc finger spans residues 371–396 (CLNCPICDKIFPATEKQIFEDHVFCH). 4 residues coordinate Zn(2+): Cys-374, Cys-377, His-392, and His-396. A Phosphoserine modification is found at Ser-397.

The protein belongs to the CALCOCO family. Dimer. Part of a complex consisting of CALCOCO2, TAX1BP1 and MYO6. Interacts with MYO6. Interacts with GEMIN4. Interacts with ATG8 family members MAP1LC3A, MAP1LC3B, GABARAP, GABARAPL1 and GABARAPL2. Interacts with ATG8 family member MAP1LC3C. Interacts with LGALS8. Interacts with TOM1; the interaction is indirect and is mediated by MYO6, which acts as a bridge between TOM1 and CALCOCO2. Interacts with AZI2.

The protein localises to the cytoplasm. The protein resides in the perinuclear region. It is found in the cytoskeleton. Its subcellular location is the cytoplasmic vesicle. It localises to the autophagosome membrane. Xenophagy-specific receptor required for autophagy-mediated intracellular bacteria degradation. Acts as an effector protein of galectin-sensed membrane damage that restricts the proliferation of infecting pathogens upon entry into the cytosol by targeting LGALS8-associated bacteria for autophagy. Initially orchestrates bacteria targeting to autophagosomes and subsequently ensures pathogen degradation by regulating pathogen-containing autophagosome maturation. Bacteria targeting to autophagosomes relies on its interaction with MAP1LC3A, MAP1LC3B and/or GABARAPL2, whereas regulation of pathogen-containing autophagosome maturation requires the interaction with MAP3LC3C. May play a role in ruffle formation and actin cytoskeleton organization and seems to negatively regulate constitutive secretion. This chain is Calcium-binding and coiled-coil domain-containing protein 2, found in Macaca fascicularis (Crab-eating macaque).